Reading from the N-terminus, the 772-residue chain is DnaJ homolog subfamily C member 16 (772 aa).

The first 25 residues, 1 to 25 (MELKRLGVSWRFLMVLVLILQSLSA), serve as a signal peptide directing secretion. At 26–533 (LDFDPYRVLG…ESLLHSNWRE (508 aa)) the chain is on the cytoplasmic side. Residues 29–93 (DPYRVLGVSR…EKRTNYDHYG (65 aa)) enclose the J domain. The Thioredoxin domain maps to 119–245 (FDESFFHFPF…LRQFVESLLP (127 aa)). The chain crosses the membrane as a helical; Anchor for type IV membrane protein span at residues 534–554 (MMPLLSLIFSALFILFGTVMV). Topologically, residues 555-772 (QAFSDSNEER…FYIPSWPELD (218 aa)) are extracellular. Positions 560-591 (SNEERESHPADKEEVPEKAGKTEPSFTKESSS) are disordered. The span at 561–580 (NEERESHPADKEEVPEKAGK) shows a compositional bias: basic and acidic residues. An N-linked (GlcNAc...) asparagine glycan is attached at Asn-629.

It localises to the endoplasmic reticulum membrane. Functionally, plays an important role in regulating the size of autophagosomes during the formation process. The sequence is that of DnaJ homolog subfamily C member 16 (Dnajc16) from Mus musculus (Mouse).